Consider the following 116-residue polypeptide: Large ribosomal subunit protein bL21c (116 aa).

Belongs to the bacterial ribosomal protein bL21 family. As to quaternary structure, part of the 50S ribosomal subunit.

It is found in the plastid. The protein resides in the chloroplast. This protein binds to 23S rRNA. This Emiliania huxleyi (Coccolithophore) protein is Large ribosomal subunit protein bL21c.